A 1735-amino-acid chain; its full sequence is Cadherin-AgCad1 (1735 aa).

The signal sequence occupies residues 1–30; it reads MKCVASKFNMWLHLGWLLGLLLVLLPLVRC. At 31-1574 the chain is on the extracellular side; that stretch reads QGWGEPRFET…ALTEADETLQ (1544 aa). The segment at 166-1456 is extracellular domain (EC); it reads VTDCLFNVYH…KVYIVSESNR (1291 aa). Cadherin domains lie at 171-273, 280-378, 379-498, 499-620, 621-757, 767-866, 879-983, 985-1109, 1136-1235, 1255-1350, and 1351-1461; these read FNVY…PPIF, ERIM…IPEI, YMKP…VPKF, GRDE…PPQI, TLPR…APYF, SVKE…QPYH, EKIP…TPKL, ELAA…TPSI, GSPL…EPTF, AEDP…PPVF, and QQRL…TFVF. Short sequence motifs (toxin-binding receptor motif) lie at residues 1344 to 1350 and 1446 to 1456; these read NDNPPVF and AKVYIVSESNR. A CR11-MPED, increases toxicity of activated Cry4B toxin, peptide alone is not toxic region spans residues 1358–1569; that stretch reads GITTNDRVPK…PLATEALTEA (212 aa). Residues 1457–1569 are membrane-proximal EC domain (MPED); it reads VTFVFLNSVE…PLATEALTEA (113 aa). The chain crosses the membrane as a helical span at residues 1575 to 1595; sequence IILIVVSAALAVLCVILFVAF. At 1596–1735 the chain is on the cytoplasmic side; it reads FIKIRSLNRQ…ETDDELSHRF (140 aa). The span at 1701–1719 shows a compositional bias: polar residues; it reads SLNPMANGTDKSNDGAPTS. The tract at residues 1701–1735 is disordered; that stretch reads SLNPMANGTDKSNDGAPTSNHKKLDETDDELSHRF. Over residues 1722-1735 the composition is skewed to basic and acidic residues; sequence KKLDETDDELSHRF.

In terms of tissue distribution, larval midgut (at protein level).

It localises to the apical cell membrane. The protein localises to the cell projection. It is found in the microvillus membrane. In terms of biological role, cadherins are calcium-dependent cell adhesion proteins. They preferentially interact with themselves in a homophilic manner in connecting cells. (Microbial infection) Binds to and is probably the functional receptor for B.thuringiensis subsp. israelensis (Bti) insecticidal toxin Cry4B. Trichoplusia ni insect cells stably transfected with this protein become suspectible to Cry4B; cells undergo oncosis, they bleb and ruffle after 20-40 minutes, swell after 40-60 minutes and lyse after 90 minutes. Following toxin treatment in the T.in insect system levels of intracellular 3',5'-cyclic AMP (cAMP) rise 12.5-fold; EDTA but not EGTA pretreatment prevents cAMP increase. Inorganic phosphate also rises 3.4-fold after toxin treatment. This chain is Cadherin-AgCad1, found in Anopheles gambiae (African malaria mosquito).